Consider the following 162-residue polypeptide: uncharacterized protein (162 aa).

A coiled-coil region spans residues 129-161 (DLNAVLKNLKEVEKKSLKISKEELKKKLDQILG).

This is an uncharacterized protein from Aquifex aeolicus (strain VF5).